Consider the following 307-residue polypeptide: Transcription factor DIVARICATA (307 aa).

Residues 21 to 74 (RSTTRWTAAENKAFENALAVFDENTPNRWERVAERVPGKTVGDVMRQYKELEDD) enclose the SANT domain. Residues 109–133 (QSYGTGGRKSSSGRPSEQERKKGVP) are disordered. Basic and acidic residues predominate over residues 124–133 (SEQERKKGVP). An HTH myb-type domain is found at 126–182 (QERKKGVPWTEEEHKLFLMGLKKYGKGDWRNISRNFVITRTPTQVASHAQKYFIRQL). The segment at residues 154–178 (WRNISRNFVITRTPTQVASHAQKYF) is a DNA-binding region (H-T-H motif). Composition is skewed to polar residues over residues 196-206 (ITTVNLSDNQT) and 222-231 (MAQQQTSSTS). The interval 196-231 (ITTVNLSDNQTPSPDNKKPPSSPDHSMAQQQTSSTS) is disordered.

The protein resides in the nucleus. Its function is as follows. Involved in the dorsovental asymmetry of flowers. Promotes ventral identity. The protein is Transcription factor DIVARICATA (DIVARICATA) of Antirrhinum majus (Garden snapdragon).